Reading from the N-terminus, the 378-residue chain is Chaperone protein DnaJ (378 aa).

Positions D5–G70 constitute a J domain. Residues G138 to T216 form a CR-type zinc finger. Zn(2+) contacts are provided by C151, C154, C168, C171, C190, C193, C204, and C207. 4 CXXCXGXG motif repeats span residues C151 to G158, C168 to G175, C190 to G197, and C204 to G211.

The protein belongs to the DnaJ family. As to quaternary structure, homodimer. The cofactor is Zn(2+).

Its subcellular location is the cytoplasm. In terms of biological role, participates actively in the response to hyperosmotic and heat shock by preventing the aggregation of stress-denatured proteins and by disaggregating proteins, also in an autonomous, DnaK-independent fashion. Unfolded proteins bind initially to DnaJ; upon interaction with the DnaJ-bound protein, DnaK hydrolyzes its bound ATP, resulting in the formation of a stable complex. GrpE releases ADP from DnaK; ATP binding to DnaK triggers the release of the substrate protein, thus completing the reaction cycle. Several rounds of ATP-dependent interactions between DnaJ, DnaK and GrpE are required for fully efficient folding. Also involved, together with DnaK and GrpE, in the DNA replication of plasmids through activation of initiation proteins. This is Chaperone protein DnaJ from Burkholderia ambifaria (strain MC40-6).